Here is a 368-residue protein sequence, read N- to C-terminus: 3-isopropylmalate dehydrogenase (368 aa).

79-91 contacts NAD(+); the sequence is GPEWGTSSTVRPE. Substrate is bound by residues Arg98, Arg108, Arg137, and Asp226. 3 residues coordinate Mg(2+): Asp226, Asp251, and Asp255. Position 291 to 303 (291 to 303) interacts with NAD(+); sequence GSAPDISGKGIVN.

Belongs to the isocitrate and isopropylmalate dehydrogenases family. As to quaternary structure, homodimer. Mg(2+) is required as a cofactor. The cofactor is Mn(2+).

The protein localises to the cytoplasm. The catalysed reaction is (2R,3S)-3-isopropylmalate + NAD(+) = 4-methyl-2-oxopentanoate + CO2 + NADH. It functions in the pathway amino-acid biosynthesis; L-leucine biosynthesis; L-leucine from 3-methyl-2-oxobutanoate: step 3/4. Its function is as follows. Catalyzes the oxidation of 3-carboxy-2-hydroxy-4-methylpentanoate (3-isopropylmalate) to 3-carboxy-4-methyl-2-oxopentanoate. The product decarboxylates to 4-methyl-2 oxopentanoate. This Neurospora crassa (strain ATCC 24698 / 74-OR23-1A / CBS 708.71 / DSM 1257 / FGSC 987) protein is 3-isopropylmalate dehydrogenase (leu-1).